Reading from the N-terminus, the 149-residue chain is Large ribosomal subunit protein uL13 (149 aa).

This sequence belongs to the universal ribosomal protein uL13 family. As to quaternary structure, part of the 50S ribosomal subunit.

This protein is one of the early assembly proteins of the 50S ribosomal subunit, although it is not seen to bind rRNA by itself. It is important during the early stages of 50S assembly. The chain is Large ribosomal subunit protein uL13 from Pelodictyon phaeoclathratiforme (strain DSM 5477 / BU-1).